An 89-amino-acid polypeptide reads, in one-letter code: uncharacterized protein (89 aa).

Basic residues-rich tracts occupy residues 1–17 (MPPH…HGHH) and 65–89 (HHGH…HGHH). Disordered stretches follow at residues 1–25 (MPPH…ITPV) and 60–89 (LETG…HGHH).

This is an uncharacterized protein from Dictyostelium discoideum (Social amoeba).